A 387-amino-acid polypeptide reads, in one-letter code: Alpha-sarcoglycan (387 aa).

A signal peptide spans 1-24 (MAAAALLWLPLLVGCLAGPGGTEA). Topologically, residues 25-290 (QQTTLYPLVG…ATARDFLADA (266 aa)) are extracellular. 2 N-linked (GlcNAc...) asparagine glycosylation sites follow: asparagine 174 and asparagine 246. The helical transmembrane segment at 291-311 (LVTLLVPLLVALLLALLLAYI) threads the bilayer. Topologically, residues 312 to 387 (MCCRREGRLK…AQVPLILDQH (76 aa)) are cytoplasmic. At serine 377 the chain carries Phosphoserine.

The protein belongs to the sarcoglycan alpha/epsilon family. As to quaternary structure, cross-link to form 2 major subcomplexes: one consisting of SGCB, SGCD and SGCG and the other consisting of SGCB and SGCD. The association between SGCB and SGCG is particularly strong while SGCA is loosely associated with the other sarcoglycans. Interacts with the syntrophin SNTA1.

The protein localises to the cell membrane. It is found in the sarcolemma. The protein resides in the cytoplasm. It localises to the cytoskeleton. Component of the sarcoglycan complex, a subcomplex of the dystrophin-glycoprotein complex which forms a link between the F-actin cytoskeleton and the extracellular matrix. In Oryctolagus cuniculus (Rabbit), this protein is Alpha-sarcoglycan (SGCA).